The chain runs to 224 residues: uncharacterized protein (224 aa).

In terms of domain architecture, HTH gntR-type spans 10–77 (TPYYLQFYNQ…DRNGFSITSL (68 aa)). The segment at residues 37–56 (ETQLAKSFGVSRSPIREAMR) is a DNA-binding region (H-T-H motif).

This is an uncharacterized protein from Bacillus subtilis (strain 168).